Consider the following 359-residue polypeptide: Probable mannitol dehydrogenase (359 aa).

Residues Cys50, His72, Cys103, Cys106, Cys109, Cys117, and Cys165 each contribute to the Zn(2+) site.

This sequence belongs to the zinc-containing alcohol dehydrogenase family. The cofactor is Zn(2+).

The catalysed reaction is D-mannitol + NAD(+) = D-mannose + NADH + H(+). Oxidizes mannitol to mannose. Provides the initial step by which translocated mannitol is committed to central metabolism and, by regulating mannitol pool size, is important in regulating salt tolerance at the cellular level. This is Probable mannitol dehydrogenase (CAD1) from Medicago sativa (Alfalfa).